The sequence spans 199 residues: Interleukin-11 (199 aa).

A signal peptide spans 1-21 (MNCVCRLVLVVLSLWPDTAVA). Residues 182–190 (HLTLDWAVR) form an important for interaction with IL11RA and for the stimulation of cell proliferation region.

Belongs to the IL-6 superfamily. As to quaternary structure, interacts with IL11RA to associate with IL6ST, giving rise to a multimeric signaling complex.

It localises to the secreted. Cytokine that stimulates the proliferation of hematopoietic stem cells and megakaryocyte progenitor cells and induces megakaryocyte maturation resulting in increased platelet production. Also promotes the proliferation of hepatocytes in response to liver damage. Binding to its receptor formed by IL6ST and IL11RA activates a signaling cascade that promotes cell proliferation. Signaling leads to the activation of intracellular protein kinases and the phosphorylation of STAT3. The interaction with the membrane-bound IL11RA and IL6ST stimulates 'classic signaling', whereas the binding of IL11 and soluble IL11RA to IL6ST stimulates 'trans-signaling'. The polypeptide is Interleukin-11 (Homo sapiens (Human)).